The following is a 1951-amino-acid chain: Sodium channel protein type 3 subunit alpha (1951 aa).

The Cytoplasmic segment spans residues 1 to 128; it reads MAQALLVPPG…KIAIKILVHS (128 aa). Residues 28 to 60 form a disordered region; it reads RAAEEKAKKPKKEQDIDDENKPKPNSDLEAGKN. The segment covering 46 to 57 has biased composition (basic and acidic residues); the sequence is ENKPKPNSDLEA. An I repeat occupies 110 to 455; that stretch reads ILTPLNPVRK…QQMLEQLKKQ (346 aa). The helical transmembrane segment at 129–146 threads the bilayer; the sequence is LFSMLIMCTILTNCVFMT. The Extracellular segment spans residues 147-152; it reads LSNPPD. The helical transmembrane segment at 153 to 174 threads the bilayer; that stretch reads WTKNVEYTFTGIYTFESLIKIL. The Cytoplasmic portion of the chain corresponds to 175–188; it reads ARGFCLEDFTFLRD. A helical transmembrane segment spans residues 189–206; that stretch reads PWNWLDFSVIVMAYVTEF. The Extracellular segment spans residues 207 to 213; it reads VDLGNVS. Asn-211 is a glycosylation site (N-linked (GlcNAc...) asparagine). A helical membrane pass occupies residues 214-235; it reads ALRTFRVLRALKTISVIPGLKT. Topologically, residues 236-249 are cytoplasmic; that stretch reads IVGALIQSVKKLSD. The helical transmembrane segment at 250-269 threads the bilayer; it reads VMILTVFCLSVFALIGLQLF. Over 270–369 the chain is Extracellular; it reads MGNLRNKCSQ…NYGYTSFDTF (100 aa). Residues Asn-290, Asn-296, Asn-302, Asn-307, and Asn-339 are each glycosylated (N-linked (GlcNAc...) asparagine). The pore-forming intramembrane region spans 370–386; the sequence is SWAFLSLFRLMTQDYWE. Residues 387 to 397 lie on the Extracellular side of the membrane; sequence NLYQLTLRAAG. The chain crosses the membrane as a helical span at residues 398-424; it reads KTYMIFFVLVIFLGSFYLVNLILAVVA. At 425-712 the chain is on the cytoplasmic side; that stretch reads MAYEEQNQAT…LVNLIVMDPF (288 aa). A phosphoserine mark is found at Ser-484, Ser-485, and Ser-486. Disordered stretches follow at residues 493-529 and 587-633; these read SKSA…SESE and VGSE…TEVR. A compositionally biased stretch (basic residues) spans 500 to 509; it reads RNRRKKRRQR. Basic and acidic residues-rich tracts occupy residues 510–529 and 596–622; these read EHLE…SESE and DEHS…ERRN. Residues 693–965 form an II repeat; that stretch reads CCDAWLKVKH…QIAVGRMQKG (273 aa). Residues 713–730 form a helical membrane-spanning segment; that stretch reads VDLAITICIVLNTLFMAM. The Extracellular segment spans residues 731 to 738; sequence EHYPMTQQ. Residues 739–763 traverse the membrane as a helical segment; the sequence is FSSVLTVGNLVFTGIFTAEMVLKII. The Cytoplasmic segment spans residues 764 to 773; that stretch reads AMDPYYYFQE. A helical membrane pass occupies residues 774 to 793; sequence GWNIFDGIIVSLSLMELGLA. At 794–797 the chain is on the extracellular side; sequence NVEG. The chain crosses the membrane as a helical span at residues 798 to 816; the sequence is LSVLRSFRLLRVFKLAKSW. At 817-834 the chain is on the cytoplasmic side; that stretch reads PTLNMLIKIIGNSVGALG. The helical transmembrane segment at 835–855 threads the bilayer; sequence NLTLVLAIIVFIFAVVGMQLF. The Extracellular portion of the chain corresponds to 856–880; sequence GKSYKECVCKINVDCKLPRWHMNDF. The cysteines at positions 864 and 870 are disulfide-linked. Residues 881 to 896 constitute an intramembrane region (pore-forming); sequence FHSFLIVFRVLCGEWI. Topologically, residues 897–907 are extracellular; the sequence is ETMWDCMEVAG. Cysteines 902 and 911 form a disulfide. Residues 908–934 form a helical membrane-spanning segment; sequence QTMCLIVFMLVMVIGNLVVLNLFLALL. At 935–1156 the chain is on the cytoplasmic side; it reads LSSFSSDNLA…RKTCYSIVEH (222 aa). The interval 1068–1112 is disordered; sequence TEEFSSESELEESKEKLNATSSSEGSTVDVAPPREGEQAEIEPEE. An III repeat occupies 1139-1450; it reads KGKIWWNLRK…KKYYNAMKKL (312 aa). A helical transmembrane segment spans residues 1157-1177; the sequence is NWFETFIVFMILLSSGALAFE. Topologically, residues 1178-1189 are extracellular; it reads DIYIEQRKTIKT. The helical transmembrane segment at 1190-1211 threads the bilayer; the sequence is MLEYADKVFTYIFILEMLLKWV. The Cytoplasmic segment spans residues 1212–1217; the sequence is AYGFQT. A helical membrane pass occupies residues 1218-1243; that stretch reads YFTNAWCWLDFLIVDVSLVSLVANAL. At 1244-1252 the chain is on the extracellular side; the sequence is GYSELGAIK. A helical transmembrane segment spans residues 1253–1271; sequence SLRTLRALRPLRALSRFEG. Topologically, residues 1272 to 1284 are cytoplasmic; sequence MRVVVNALVGAIP. A helical membrane pass occupies residues 1285 to 1307; the sequence is SIMNVLLVCLIFWLIFSIMGVNL. Residues 1308-1353 lie on the Extracellular side of the membrane; the sequence is FAGKFYHCVNTTTGNMFEIKEVNNFSDCQALGKQARWKNVKVNFDN. The cysteines at positions 1315 and 1335 are disulfide-linked. 2 N-linked (GlcNAc...) asparagine glycosylation sites follow: Asn-1317 and Asn-1331. Residues 1354–1370 constitute an intramembrane region (pore-forming); that stretch reads VGAGYLALLQVATFKGW. Residues 1371 to 1393 are Extracellular-facing; sequence MDIMYAAVDSRDVKLQPIYEENL. A helical transmembrane segment spans residues 1394–1419; it reads YMYLYFVIFIIFGSFFTLNLFIGVII. At 1420–1477 the chain is on the cytoplasmic side; sequence DNFNQQKKKFGGQDIFMTEEQKKYYNAMKKLGSKKPQKPIPRPANKFQGMVFDFVTRQ. Position 1452 is a phosphoserine; by PKC (Ser-1452). The stretch at 1459–1757 is one IV repeat; sequence IPRPANKFQG…WEKFDPDATQ (299 aa). The helical transmembrane segment at 1478–1496 threads the bilayer; sequence VFDISIMILICLNMVTMMV. At 1497–1504 the chain is on the extracellular side; sequence ETDDQSKY. Residues 1505–1528 traverse the membrane as a helical segment; sequence MTLVLSRINLVFIVLFTGEFLLKL. Topologically, residues 1529-1538 are cytoplasmic; sequence ISLRYYYFTI. Residues 1539–1556 traverse the membrane as a helical segment; the sequence is GWNIFDFVVVILSIVGMF. At 1557 to 1568 the chain is on the extracellular side; it reads LAELIEKYFVSP. The chain crosses the membrane as a helical span at residues 1569–1591; that stretch reads TLFRVIRLARIGRILRLIKGAKG. Residues 1592 to 1604 are Cytoplasmic-facing; sequence IRTLLFALMMSLP. A helical transmembrane segment spans residues 1605-1628; sequence ALFNIGLLLFLVMFIYAIFGMSNF. Residues 1629-1650 lie on the Extracellular side of the membrane; sequence AYVKKEAGIDDMFNFETFGNSM. An intramembrane region (pore-forming) is located at residues 1651-1663; it reads ICLFQITTSAGWD. Over 1664-1695 the chain is Extracellular; sequence GLLAPILNSAPPDCDPDAIHPGSSVKGDCGNP. The helical transmembrane segment at 1696-1721 threads the bilayer; that stretch reads SVGIFFFVSYIIISFLVVVNMYIAVI. Topologically, residues 1722–1951 are cytoplasmic; the sequence is LENFSVATEE…KGKEVRENQK (230 aa). In terms of domain architecture, IQ spans 1851–1880; sequence EEVSAAIIQRNYRCYLLKQRLKNISSKYDK. A disordered region spans residues 1898–1951; the sequence is DKLNGNSTPEKTDGSSSTTSPPSYDSVTKPDKEKFEKDKPEKEIKGKEVRENQK. A compositionally biased stretch (basic and acidic residues) spans 1925–1951; it reads TKPDKEKFEKDKPEKEIKGKEVRENQK.

Belongs to the sodium channel (TC 1.A.1.10) family. Nav1.3/SCN3A subfamily. Heterooligomer of an alpha subunit, SCN3A, and 1 to 3 regulatory beta subunits including SCN1B and SCN2B; disulfide-linked with some beta subunits like SCN2B. Interacts with NEDD4L; could regulate expression of SCN3A at the plasma membrane through ubiquitination-regulated endocytosis. Interacts with the conotoxin GVIIJ. Interacts with the spider beta/delta-theraphotoxin-Pre1a. Interacts with the spider RTX-VII toxin (AC P0DL75). Post-translationally, may be ubiquitinated by NEDD4L; which would promote its endocytosis. Phosphorylation at Ser-1452 by PKC in a highly conserved cytoplasmic loop slows inactivation of the sodium channel and reduces peak sodium currents.

Its subcellular location is the cell membrane. It is found in the basal cell membrane. The catalysed reaction is Na(+)(in) = Na(+)(out). In terms of biological role, pore-forming subunit of Nav1.3, a voltage-gated sodium (Nav) channel that directly mediates the depolarizing phase of action potentials in excitable membranes. Navs, also called VGSCs (voltage-gated sodium channels) or VDSCs (voltage-dependent sodium channels), operate by switching between closed and open conformations depending on the voltage difference across the membrane. In the open conformation they allow Na(+) ions to selectively pass through the pore, along their electrochemical gradient. The influx of Na+ ions provokes membrane depolarization, initiating the propagation of electrical signals throughout cells and tissues. In some secretory cell types, it also participates in cell excitability through membrane depolarization and regulates cells responsiveness to stimuli triggering secretion. For instance, it controls the release of serotonin/5-hydroxytryptamine by enterochromaffin cells and is required for both glucagon- and glucose-induced insulin secretion in pancreatic endocrine cells. This chain is Sodium channel protein type 3 subunit alpha, found in Rattus norvegicus (Rat).